Consider the following 72-residue polypeptide: Conotoxin VnMKLT2-011 (72 aa).

Positions 1–23 (MMKLTCVLIIAVLFLTACQLTTA) are cleaved as a signal peptide. A propeptide spanning residues 24–42 (ETRDEYRAVRSSDEVRNSR) is cleaved from the precursor. 3 disulfide bridges follow: cysteine 44–cysteine 57, cysteine 51–cysteine 62, and cysteine 56–cysteine 71.

This sequence belongs to the conotoxin O1 superfamily. In terms of tissue distribution, expressed by the venom duct.

It is found in the secreted. This Conus ventricosus (Mediterranean cone) protein is Conotoxin VnMKLT2-011.